The sequence spans 290 residues: Acetyl-coenzyme A carboxylase carboxyl transferase subunit beta (290 aa).

The CoA carboxyltransferase N-terminal domain maps to 28–290 (VMTKCPQCKK…KGGEEGWWRN (263 aa)). Cysteine 32, cysteine 35, cysteine 51, and cysteine 54 together coordinate Zn(2+). A C4-type zinc finger spans residues 32–54 (CPQCKKIMYTKELIKNLRVCLSC).

The protein belongs to the AccD/PCCB family. As to quaternary structure, acetyl-CoA carboxylase is a heterohexamer composed of biotin carboxyl carrier protein (AccB), biotin carboxylase (AccC) and two subunits each of ACCase subunit alpha (AccA) and ACCase subunit beta (AccD). Requires Zn(2+) as cofactor.

The protein resides in the cytoplasm. The enzyme catalyses N(6)-carboxybiotinyl-L-lysyl-[protein] + acetyl-CoA = N(6)-biotinyl-L-lysyl-[protein] + malonyl-CoA. It participates in lipid metabolism; malonyl-CoA biosynthesis; malonyl-CoA from acetyl-CoA: step 1/1. Functionally, component of the acetyl coenzyme A carboxylase (ACC) complex. Biotin carboxylase (BC) catalyzes the carboxylation of biotin on its carrier protein (BCCP) and then the CO(2) group is transferred by the transcarboxylase to acetyl-CoA to form malonyl-CoA. The sequence is that of Acetyl-coenzyme A carboxylase carboxyl transferase subunit beta from Geobacillus kaustophilus (strain HTA426).